The following is a 646-amino-acid chain: Cell surface glycoprotein MUC18 (646 aa).

The N-terminal stretch at 1 to 23 is a signal peptide; it reads MGLPRLVCAFLLAACCCCPRVAG. Ig-like V-type domains are found at residues 24–129 and 139–242; these read VPGE…YRIQ and PNIQ…REVT. The Extracellular portion of the chain corresponds to 24 to 559; sequence VPGEAEQPAP…RKLPEPESRG (536 aa). 4 cysteine pairs are disulfide-bonded: C48–C116, C161–C223, C272–C320, and C365–C407. A glycan (N-linked (GlcNAc...) asparagine) is linked at N56. 3 Ig-like C2-type domains span residues 244-330, 335-424, and 430-510; these read PVFY…TMIS, PQEL…QLVN, and PPWM…KNTS. Positions 278 to 299 are disordered; that stretch reads PPPHFSISKQNPSTREAEEETT. 7 N-linked (GlcNAc...) asparagine glycosylation sites follow: N418, N449, N467, N508, N518, N527, and N544. Cysteines 452 and 499 form a disulfide. The disordered stretch occupies residues 525-554; it reads DSNTTTGLSTSTASPHTRANSTSTERKLPE. The span at 533 to 547 shows a compositional bias: polar residues; it reads STSTASPHTRANSTS. A helical membrane pass occupies residues 560–583; it reads VVIVAVIVCILVLAVLGAVLYFLY. Over 584–646 the chain is Cytoplasmic; sequence KKGKLPCRRS…QGEKYIDLRH (63 aa). Residues S606, S614, and S628 each carry the phosphoserine modification. The disordered stretch occupies residues 620–646; sequence EMGLLQGSSGDKRAPGDQGEKYIDLRH. A compositionally biased stretch (basic and acidic residues) spans 629–646; sequence GDKRAPGDQGEKYIDLRH.

In terms of tissue distribution, detected in endothelial cells in vascular tissue throughout the body. May appear at the surface of neural crest cells during their embryonic migration. Appears to be limited to vascular smooth muscle in normal adult tissues. Associated with tumor progression and the development of metastasis in human malignant melanoma. Expressed most strongly on metastatic lesions and advanced primary tumors and is only rarely detected in benign melanocytic nevi and thin primary melanomas with a low probability of metastasis.

It localises to the membrane. Functionally, plays a role in cell adhesion, and in cohesion of the endothelial monolayer at intercellular junctions in vascular tissue. Its expression may allow melanoma cells to interact with cellular elements of the vascular system, thereby enhancing hematogeneous tumor spread. Could be an adhesion molecule active in neural crest cells during embryonic development. Acts as a surface receptor that triggers tyrosine phosphorylation of FYN and PTK2/FAK1, and a transient increase in the intracellular calcium concentration. The chain is Cell surface glycoprotein MUC18 (MCAM) from Homo sapiens (Human).